A 282-amino-acid chain; its full sequence is U1 small nuclear ribonucleoprotein A (282 aa).

Ala-2 is modified (N-acetylalanine). The RRM 1 domain maps to 10–89 (HTIYINNLNE…KPMRIQYAKT (80 aa)). Lys-60 is subject to N6-acetyllysine. The interval 100–132 (TFVERDRKREKRKPKSQETPATKKAVQGGGATP) is disordered. Position 131 is a phosphothreonine (Thr-131). Position 152 is an omega-N-methylarginine (Arg-152). The RRM 2 domain occupies 208 to 282 (HILFLTNLPE…NAMKISFAKK (75 aa)).

It belongs to the RRM U1 A/B'' family. In terms of assembly, U1 snRNP is composed of the 7 core Sm proteins SNRPB, SNRPD1, SNRPD2, SNRPD3, SNRPE, SNRPF and SNRPG that assemble in a heptameric protein ring on the Sm site of the small nuclear RNA to form the core snRNP, and at least three U1 snRNP-specific proteins SNRNP70/U1-70K, SNRPA/U1-A and SNRPC/U1-C. Interacts with SFPQ; component of a snRNP-free complex with SFPQ. Interacts with IVNS1ABP (via BACK domain); the interaction is indirect.

The protein localises to the nucleus. Component of the spliceosomal U1 snRNP, which is essential for recognition of the pre-mRNA 5' splice-site and the subsequent assembly of the spliceosome. U1 snRNP is the first snRNP to interact with pre-mRNA. This interaction is required for the subsequent binding of U2 snRNP and the U4/U6/U5 tri-snRNP. SNRPA binds stem loop II of U1 snRNA. In a snRNP-free form (SF-A) may be involved in coupled pre-mRNA splicing and polyadenylation process. May bind preferentially to the 5'-UGCAC-3' motif on RNAs. The polypeptide is U1 small nuclear ribonucleoprotein A (SNRPA) (Homo sapiens (Human)).